The following is a 257-amino-acid chain: Urease accessory protein UreD (257 aa).

It belongs to the UreD family. In terms of assembly, ureD, UreF and UreG form a complex that acts as a GTP-hydrolysis-dependent molecular chaperone, activating the urease apoprotein by helping to assemble the nickel containing metallocenter of UreC. The UreE protein probably delivers the nickel.

Its subcellular location is the cytoplasm. In terms of biological role, required for maturation of urease via the functional incorporation of the urease nickel metallocenter. This Ruegeria pomeroyi (strain ATCC 700808 / DSM 15171 / DSS-3) (Silicibacter pomeroyi) protein is Urease accessory protein UreD.